The chain runs to 208 residues: Pyridoxal 5'-phosphate synthase subunit PdxT (208 aa).

L-glutamine is bound at residue 46 to 48; sequence GES. The active-site Nucleophile is Cys78. Residues Arg105 and 156–157 each bind L-glutamine; that span reads IR. Residues His192 and Glu194 each act as charge relay system in the active site.

It belongs to the glutaminase PdxT/SNO family. In terms of assembly, in the presence of PdxS, forms a dodecamer of heterodimers. Only shows activity in the heterodimer.

It carries out the reaction aldehydo-D-ribose 5-phosphate + D-glyceraldehyde 3-phosphate + L-glutamine = pyridoxal 5'-phosphate + L-glutamate + phosphate + 3 H2O + H(+). It catalyses the reaction L-glutamine + H2O = L-glutamate + NH4(+). The protein operates within cofactor biosynthesis; pyridoxal 5'-phosphate biosynthesis. In terms of biological role, catalyzes the hydrolysis of glutamine to glutamate and ammonia as part of the biosynthesis of pyridoxal 5'-phosphate. The resulting ammonia molecule is channeled to the active site of PdxS. This is Pyridoxal 5'-phosphate synthase subunit PdxT from Bifidobacterium adolescentis (strain ATCC 15703 / DSM 20083 / NCTC 11814 / E194a).